We begin with the raw amino-acid sequence, 455 residues long: Ribulose bisphosphate carboxylase large chain (455 aa).

An N6,N6,N6-trimethyllysine modification is found at Lys5. 2 residues coordinate substrate: Asn114 and Thr164. Lys166 (proton acceptor) is an active-site residue. Residue Lys168 coordinates substrate. Positions 192, 194, and 195 each coordinate Mg(2+). Position 192 is an N6-carboxylysine (Lys192). His285 functions as the Proton acceptor in the catalytic mechanism. Arg286, His318, and Ser370 together coordinate substrate.

It belongs to the RuBisCO large chain family. Type I subfamily. Heterohexadecamer of 8 large chains and 8 small chains; disulfide-linked. The disulfide link is formed within the large subunit homodimers. Mg(2+) serves as cofactor. In terms of processing, the disulfide bond which can form in the large chain dimeric partners within the hexadecamer appears to be associated with oxidative stress and protein turnover.

It localises to the plastid. The protein resides in the chloroplast. It carries out the reaction 2 (2R)-3-phosphoglycerate + 2 H(+) = D-ribulose 1,5-bisphosphate + CO2 + H2O. The catalysed reaction is D-ribulose 1,5-bisphosphate + O2 = 2-phosphoglycolate + (2R)-3-phosphoglycerate + 2 H(+). Its function is as follows. RuBisCO catalyzes two reactions: the carboxylation of D-ribulose 1,5-bisphosphate, the primary event in carbon dioxide fixation, as well as the oxidative fragmentation of the pentose substrate in the photorespiration process. Both reactions occur simultaneously and in competition at the same active site. The chain is Ribulose bisphosphate carboxylase large chain from Lupinus albus (White lupine).